The sequence spans 457 residues: Siroheme synthase (457 aa).

The interval 1-204 (MDHLPIFCQL…NDQKAITETT (204 aa)) is precorrin-2 dehydrogenase /sirohydrochlorin ferrochelatase. NAD(+) is bound by residues 22-23 (DV) and 43-44 (LA). Ser-128 bears the Phosphoserine mark. Positions 216 to 457 (GEVVLVGAGP…RDKLNWFSNH (242 aa)) are uroporphyrinogen-III C-methyltransferase. Pro-225 contacts S-adenosyl-L-methionine. Asp-248 functions as the Proton acceptor in the catalytic mechanism. Catalysis depends on Lys-270, which acts as the Proton donor. Residues 301-303 (GGD), Ile-306, 331-332 (TA), Met-382, and Gly-411 contribute to the S-adenosyl-L-methionine site.

This sequence in the N-terminal section; belongs to the precorrin-2 dehydrogenase / sirohydrochlorin ferrochelatase family. In the C-terminal section; belongs to the precorrin methyltransferase family.

The enzyme catalyses uroporphyrinogen III + 2 S-adenosyl-L-methionine = precorrin-2 + 2 S-adenosyl-L-homocysteine + H(+). The catalysed reaction is precorrin-2 + NAD(+) = sirohydrochlorin + NADH + 2 H(+). It catalyses the reaction siroheme + 2 H(+) = sirohydrochlorin + Fe(2+). The protein operates within cofactor biosynthesis; adenosylcobalamin biosynthesis; precorrin-2 from uroporphyrinogen III: step 1/1. Its pathway is cofactor biosynthesis; adenosylcobalamin biosynthesis; sirohydrochlorin from precorrin-2: step 1/1. It participates in porphyrin-containing compound metabolism; siroheme biosynthesis; precorrin-2 from uroporphyrinogen III: step 1/1. It functions in the pathway porphyrin-containing compound metabolism; siroheme biosynthesis; siroheme from sirohydrochlorin: step 1/1. The protein operates within porphyrin-containing compound metabolism; siroheme biosynthesis; sirohydrochlorin from precorrin-2: step 1/1. Multifunctional enzyme that catalyzes the SAM-dependent methylations of uroporphyrinogen III at position C-2 and C-7 to form precorrin-2 via precorrin-1. Then it catalyzes the NAD-dependent ring dehydrogenation of precorrin-2 to yield sirohydrochlorin. Finally, it catalyzes the ferrochelation of sirohydrochlorin to yield siroheme. The polypeptide is Siroheme synthase (Escherichia coli O8 (strain IAI1)).